An 89-amino-acid polypeptide reads, in one-letter code: Cell division topological specificity factor (89 aa).

This sequence belongs to the MinE family.

Prevents the cell division inhibition by proteins MinC and MinD at internal division sites while permitting inhibition at polar sites. This ensures cell division at the proper site by restricting the formation of a division septum at the midpoint of the long axis of the cell. This chain is Cell division topological specificity factor, found in Proteus mirabilis (strain HI4320).